The chain runs to 74 residues: Sec-independent protein translocase protein TatA (74 aa).

The helical transmembrane segment at 1–21 (MGSFSIWHWLIVLLIVVLVFG) threads the bilayer.

Belongs to the TatA/E family. As to quaternary structure, the Tat system comprises two distinct complexes: a TatABC complex, containing multiple copies of TatA, TatB and TatC subunits, and a separate TatA complex, containing only TatA subunits. Substrates initially bind to the TatABC complex, which probably triggers association of the separate TatA complex to form the active translocon.

It is found in the cell inner membrane. In terms of biological role, part of the twin-arginine translocation (Tat) system that transports large folded proteins containing a characteristic twin-arginine motif in their signal peptide across membranes. TatA could form the protein-conducting channel of the Tat system. The protein is Sec-independent protein translocase protein TatA of Nitrosospira multiformis (strain ATCC 25196 / NCIMB 11849 / C 71).